The primary structure comprises 309 residues: L-aminoadipate-semialdehyde dehydrogenase-phosphopantetheinyl transferase (309 aa).

Residues Arg47, 86-91, and 108-111 contribute to the CoA site; these read RTAKGK and NISH. Positions 129 and 181 each coordinate Mg(2+). 181-185 lines the CoA pocket; it reads ESFIK. Ser258 is modified (phosphoserine).

This sequence belongs to the P-Pant transferase superfamily. AcpS family. In terms of assembly, monomer. Mg(2+) serves as cofactor.

The protein resides in the cytoplasm. The protein localises to the cytosol. It catalyses the reaction apo-[ACP] + CoA = holo-[ACP] + adenosine 3',5'-bisphosphate + H(+). The catalysed reaction is apo-[ACP] + acetyl-CoA = acetyl-[ACP] + adenosine 3',5'-bisphosphate + H(+). Catalyzes the post-translational modification of target proteins by phosphopantetheine. Can transfer the 4'-phosphopantetheine moiety from coenzyme A, regardless of whether the CoA is presented in the free thiol form or as an acetyl thioester, to a serine residue of a broad range of acceptors including the acyl carrier domain of FASN. The protein is L-aminoadipate-semialdehyde dehydrogenase-phosphopantetheinyl transferase (AASDHPPT) of Pongo abelii (Sumatran orangutan).